Here is a 322-residue protein sequence, read N- to C-terminus: GATA transcription factor 8 (322 aa).

Residues 93 to 168 are disordered; it reads TLVEKKEDSF…DKDRVKDNVC (76 aa). Low complexity predominate over residues 102–141; that stretch reads FSTNTDSSSSHSQFRSSSPVSVLESSSSSSQTTNTTSLVL. Basic residues predominate over residues 144-154; the sequence is KHGRPRTKRPR. A Nuclear localization signal motif is present at residues 147–154; the sequence is RPRTKRPR. The GATA-type zinc-finger motif lies at 225-279; that stretch reads QYPLRKCMHCEVTKTPQWRLGPMGPKTLCNACGVRYKSGRLFPEYRPAASPTFTP.

Belongs to the type IV zinc-finger family. Class A subfamily.

It is found in the nucleus. Transcriptional activator that specifically binds 5'-GATA-3' or 5'-GAT-3' motifs within gene promoters. May be involved in the regulation of some light-responsive genes. This Arabidopsis thaliana (Mouse-ear cress) protein is GATA transcription factor 8 (GATA8).